Here is a 588-residue protein sequence, read N- to C-terminus: Sentrin-specific protease 2 (588 aa).

A Nuclear localization signal motif is present at residues 28–31 (KRRR). Phosphoserine is present on Ser32. The Nuclear localization signal motif lies at 47 to 52 (PAKRPR). The tract at residues 72-381 (GFPFQLTTKP…EKEISNALGH (310 aa)) is axin-binding. The disordered stretch occupies residues 157–184 (EGYNRRPSGRRHSKSNPESSLPWKPQEQ). A Nuclear export signal motif is present at residues 316–331 (LEPDLSEEVSARLRLG). Ser332 and Ser343 each carry phosphoserine. The tract at residues 394–558 (LRITRGDIQT…MFTCKYADYI (165 aa)) is protease. Residues His477 and Asp494 contribute to the active site. Cys547 (nucleophile) is an active-site residue.

It belongs to the peptidase C48 family. As to quaternary structure, binds to SUMO2 and SUMO3. Interacts with the C-terminal domain of NUP153 via its N-terminus. Interacts with MTA1. Binds to AXIN1. Post-translationally, polyubiquitinated; which leads to proteasomal degradation. Ubiquitous. Highly expressed in brain, lung and testis.

It is found in the nucleus. It localises to the nuclear pore complex. The protein localises to the nucleus membrane. Its subcellular location is the cytoplasm. Its function is as follows. Protease that catalyzes two essential functions in the SUMO pathway. The first is the hydrolysis of an alpha-linked peptide bond at the C-terminal end of the small ubiquitin-like modifier (SUMO) propeptides, SUMO1, SUMO2 and SUMO3 leading to the mature form of the proteins. The second is the deconjugation of SUMO1, SUMO2 and SUMO3 from targeted proteins, by cleaving an epsilon-linked peptide bond between the C-terminal glycine of the mature SUMO and the lysine epsilon-amino group of the target protein. May down-regulate CTNNB1 levels and thereby modulate the Wnt pathway. Deconjugates SUMO2 from MTA1. Plays a dynamic role in adipogenesis by desumoylating and promoting the stabilization of CEBPB. Acts as a regulator of the cGAS-STING pathway by catalyzing desumoylation of CGAS and STING1 during the late phase of viral infection. This Rattus norvegicus (Rat) protein is Sentrin-specific protease 2 (Senp2).